The sequence spans 283 residues: Lactoylglutathione lyase GLX1 (283 aa).

N-acetylalanine is present on alanine 2. VOC domains follow at residues 17–141 and 147–275; these read RFLH…LIQR and PFCQ…LVDN. Residue histidine 20 coordinates Zn(2+). Position 24 (arginine 24) interacts with substrate. Glutamate 71 serves as a coordination point for Zn(2+). Substrate contacts are provided by asparagine 75 and histidine 89. Zn(2+) contacts are provided by histidine 89, glutamate 137, and glutamine 150. Glutamate 137 acts as the Proton donor/acceptor in catalysis. Glutamine 150 and arginine 154 together coordinate substrate. Glutamine 150 lines the a divalent metal cation pocket. Glutamate 201 is a binding site for Zn(2+). Glutamate 201 is a binding site for a divalent metal cation. Asparagine 205 contributes to the substrate binding site. Glutamine 219 serves as a coordination point for a divalent metal cation. Substrate is bound at residue 251–252; that stretch reads PL. A divalent metal cation is bound at residue valine 271.

The protein belongs to the glyoxalase I family. As to quaternary structure, homodimer. Zn(2+) serves as cofactor. Post-translationally, phosphorylated by SnRK2.8.

It carries out the reaction (R)-S-lactoylglutathione = methylglyoxal + glutathione. Its pathway is secondary metabolite metabolism; methylglyoxal degradation; (R)-lactate from methylglyoxal: step 1/2. Functionally, catalyzes the conversion of hemimercaptal, formed from methylglyoxal and glutathione, to S-lactoylglutathione. The sequence is that of Lactoylglutathione lyase GLX1 from Arabidopsis thaliana (Mouse-ear cress).